The primary structure comprises 455 residues: Protein png1 (455 aa).

The disordered stretch occupies residues 1-110 (MTDGRQQHTR…LPVFPSPPRD (110 aa)). Low complexity predominate over residues 38–53 (SLQEQSRSRSRTQSPS). The span at 59-73 (HTPPHPSRAPPPPPT) shows a compositional bias: pro residues. The segment covering 74–98 (GAHYPSSQSPSQQHQQHQLPASSSL) has biased composition (low complexity). Zn(2+) contacts are provided by Cys-199, Cys-202, Cys-231, and Cys-236. A disordered region spans residues 408 to 455 (NLIPREQTSGRPGEQKTPASMQDTPVDWVAAQQMGPGQSGPDRSQDGR).

It belongs to the transglutaminase-like superfamily. PNGase family.

The sequence is that of Protein png1 (png1) from Aspergillus fumigatus (strain ATCC MYA-4609 / CBS 101355 / FGSC A1100 / Af293) (Neosartorya fumigata).